Here is a 35-residue protein sequence, read N- to C-terminus: Photosystem II reaction center protein T (35 aa).

The chain crosses the membrane as a helical span at residues 3 to 23 (ALVYTFLLVSTLGIIFFAIFF).

It belongs to the PsbT family. In terms of assembly, PSII is composed of 1 copy each of membrane proteins PsbA, PsbB, PsbC, PsbD, PsbE, PsbF, PsbH, PsbI, PsbJ, PsbK, PsbL, PsbM, PsbT, PsbY, PsbZ, Psb30/Ycf12, at least 3 peripheral proteins of the oxygen-evolving complex and a large number of cofactors. It forms dimeric complexes.

It is found in the plastid. Its subcellular location is the chloroplast thylakoid membrane. In terms of biological role, found at the monomer-monomer interface of the photosystem II (PS II) dimer, plays a role in assembly and dimerization of PSII. PSII is a light-driven water plastoquinone oxidoreductase, using light energy to abstract electrons from H(2)O, generating a proton gradient subsequently used for ATP formation. The chain is Photosystem II reaction center protein T from Stangeria eriopus (Natal grass cycad).